Reading from the N-terminus, the 356-residue chain is Protein-glutamate methylesterase/protein-glutamine glutaminase 3 (356 aa).

One can recognise a Response regulatory domain in the interval 3–120; sequence KVAIVDDSAV…KGFLEESQAR (118 aa). A 4-aspartylphosphate modification is found at Asp54. The CheB-type methylesterase domain occupies 165-356; it reads NQTTDRVVAL…AEEIIAFTKQ (192 aa). Catalysis depends on residues Ser177, His203, and Asp299.

This sequence belongs to the CheB family. Phosphorylated by CheA. Phosphorylation of the N-terminal regulatory domain activates the methylesterase activity.

It localises to the cytoplasm. It carries out the reaction [protein]-L-glutamate 5-O-methyl ester + H2O = L-glutamyl-[protein] + methanol + H(+). The catalysed reaction is L-glutaminyl-[protein] + H2O = L-glutamyl-[protein] + NH4(+). Involved in chemotaxis. Part of a chemotaxis signal transduction system that modulates chemotaxis in response to various stimuli. Catalyzes the demethylation of specific methylglutamate residues introduced into the chemoreceptors (methyl-accepting chemotaxis proteins or MCP) by CheR. Also mediates the irreversible deamidation of specific glutamine residues to glutamic acid. In Shewanella oneidensis (strain ATCC 700550 / JCM 31522 / CIP 106686 / LMG 19005 / NCIMB 14063 / MR-1), this protein is Protein-glutamate methylesterase/protein-glutamine glutaminase 3.